A 276-amino-acid polypeptide reads, in one-letter code: Exosome complex component RRP43 (276 aa).

N-acetylalanine is present on Ala2.

This sequence belongs to the RNase PH family. In terms of assembly, component of the RNA exosome core complex (Exo-9), composed of EXOSC1, EXOSC2, EXOSC3, EXOSC4, EXOSC5, EXOSC6, EXOSC7, EXOSC8 and EXOSC9; within the complex interacts with EXOSC5 and EXOSC6. The catalytically inactive RNA exosome core complex (Exo-9) associates with the catalytic subunit EXOSC10/RRP6. Exo-9 may associate with DIS3 to form the nucleolar exosome complex, or DIS3L to form the cytoplasmic exosome complex. Exo-9 is formed by a hexameric base ring consisting of the heterodimers EXOSC4-EXOSC9, EXOSC5-EXOSC8 and EXOSC6-EXOSC7, and a cap ring consisting of EXOSC1, EXOSC2 and EXOSC3. The RNA exosome complex associates with cofactors C1D/RRP47, MPHOSPH6/MPP6 and MTREX/MTR4. Binds outer membrane protein opap from Neisseria gonorrhoeae.

The protein resides in the cytoplasm. It localises to the nucleus. Its subcellular location is the nucleolus. Its function is as follows. Non-catalytic component of the RNA exosome complex which has 3'-&gt;5' exoribonuclease activity and participates in a multitude of cellular RNA processing and degradation events. In the nucleus, the RNA exosome complex is involved in proper maturation of stable RNA species such as rRNA, snRNA and snoRNA, in the elimination of RNA processing by-products and non-coding 'pervasive' transcripts, such as antisense RNA species and promoter-upstream transcripts (PROMPTs), and of mRNAs with processing defects, thereby limiting or excluding their export to the cytoplasm. The RNA exosome may be involved in Ig class switch recombination (CSR) and/or Ig variable region somatic hypermutation (SHM) by targeting AICDA deamination activity to transcribed dsDNA substrates. In the cytoplasm, the RNA exosome complex is involved in general mRNA turnover and specifically degrades inherently unstable mRNAs containing AU-rich elements (AREs) within their 3' untranslated regions, and in RNA surveillance pathways, preventing translation of aberrant mRNAs. It seems to be involved in degradation of histone mRNA. The catalytic inactive RNA exosome core complex of 9 subunits (Exo-9) is proposed to play a pivotal role in the binding and presentation of RNA for ribonucleolysis, and to serve as a scaffold for the association with catalytic subunits and accessory proteins or complexes. EXOSC8 binds to ARE-containing RNAs. This chain is Exosome complex component RRP43 (EXOSC8), found in Homo sapiens (Human).